A 275-amino-acid polypeptide reads, in one-letter code: NAD kinase (275 aa).

The active-site Proton acceptor is Asp-68. Residues Asp-68 to Gly-69, Arg-73, Asn-136 to Glu-137, Lys-147, Arg-164, Asp-166, Thr-177 to Ser-182, Ala-201, and Gln-236 contribute to the NAD(+) site.

It belongs to the NAD kinase family. The cofactor is a divalent metal cation.

Its subcellular location is the cytoplasm. It carries out the reaction NAD(+) + ATP = ADP + NADP(+) + H(+). Its function is as follows. Involved in the regulation of the intracellular balance of NAD and NADP, and is a key enzyme in the biosynthesis of NADP. Catalyzes specifically the phosphorylation on 2'-hydroxyl of the adenosine moiety of NAD to yield NADP. In Methanosarcina barkeri (strain Fusaro / DSM 804), this protein is NAD kinase.